A 1200-amino-acid chain; its full sequence is uncharacterized protein (1200 aa).

Disordered regions lie at residues 282 to 302 (SQES…GCTS), 323 to 372 (LSEA…PQGS), 392 to 491 (SQEP…KASL), 510 to 568 (RAKS…RIGA), and 1056 to 1200 (SCPE…LASL). A compositionally biased stretch (low complexity) spans 420–435 (ASSPRLSPASPAAAAS). Positions 437-448 (TKIEVKTKERNG) are enriched in basic and acidic residues. Residues 518 to 527 (GTTQTKTSGP) show a composition bias toward polar residues. Basic and acidic residues predominate over residues 1137-1153 (EDGKGSHKLPDPAREHL). Residues 1160 to 1171 (RQQPPRQSQVPR) show a composition bias toward low complexity. Positions 1175–1200 (GSFSSEGTDSQTSLEDSPQTSPLASL) are enriched in polar residues.

This is an uncharacterized protein from Homo sapiens (Human).